Here is a 219-residue protein sequence, read N- to C-terminus: Translation initiation factor 6 (219 aa).

It belongs to the eIF-6 family.

Its function is as follows. Binds to the 50S ribosomal subunit and prevents its association with the 30S ribosomal subunit to form the 70S initiation complex. The polypeptide is Translation initiation factor 6 (Methanosarcina mazei (strain ATCC BAA-159 / DSM 3647 / Goe1 / Go1 / JCM 11833 / OCM 88) (Methanosarcina frisia)).